A 302-amino-acid chain; its full sequence is tRNA dimethylallyltransferase (302 aa).

Gly-12–Ser-19 is an ATP binding site. Thr-14–Ser-19 provides a ligand contact to substrate. Positions Asp-37–Gln-40 are interaction with substrate tRNA.

Belongs to the IPP transferase family. In terms of assembly, monomer. Requires Mg(2+) as cofactor.

The enzyme catalyses adenosine(37) in tRNA + dimethylallyl diphosphate = N(6)-dimethylallyladenosine(37) in tRNA + diphosphate. Catalyzes the transfer of a dimethylallyl group onto the adenine at position 37 in tRNAs that read codons beginning with uridine, leading to the formation of N6-(dimethylallyl)adenosine (i(6)A). The chain is tRNA dimethylallyltransferase from Corynebacterium diphtheriae (strain ATCC 700971 / NCTC 13129 / Biotype gravis).